The sequence spans 1058 residues: Lon protease homolog, mitochondrial (1058 aa).

Residues 1 to 47 (MLTRIRNAGVGGNAARRVRLLAGYTGARMAHAAALNSTTGAGGAARA) constitute a mitochondrion transit peptide. The tract at residues 72 to 151 (GGQCILKQDR…RSNPPSEGEV (80 aa)) is disordered. Basic and acidic residues-rich tracts occupy residues 78 to 97 (KQDR…RAEE) and 106 to 118 (DEEA…EEQA). Positions 129 to 142 (GSGGSASSAGGGGR) are enriched in gly residues. A Lon N-terminal domain is found at 158 to 412 (LMVLPMSNRP…KALVFIKKEV (255 aa)). Position 564 to 571 (564 to 571 (GPPGVGKT)) interacts with ATP. A disordered region spans residues 778–814 (TPKSAPAETNIEPENGKPDASAKPLTNNLPAPEPLNI). Residues 844-1030 (KTPAGVVMGL…DDVFNVLFGS (187 aa)) enclose the Lon proteolytic domain. Residues Ser936 and Lys979 contribute to the active site.

It belongs to the peptidase S16 family. As to quaternary structure, homohexamer or homoheptamer. Organized in a ring with a central cavity.

The protein resides in the mitochondrion matrix. It carries out the reaction Hydrolysis of proteins in presence of ATP.. In terms of biological role, ATP-dependent serine protease that mediates the selective degradation of misfolded, unassembled or oxidatively damaged polypeptides as well as certain short-lived regulatory proteins in the mitochondrial matrix. May also have a chaperone function in the assembly of inner membrane protein complexes. Participates in the regulation of mitochondrial gene expression and in the maintenance of the integrity of the mitochondrial genome. Binds to mitochondrial DNA in a site-specific manner. The chain is Lon protease homolog, mitochondrial from Eremothecium gossypii (strain ATCC 10895 / CBS 109.51 / FGSC 9923 / NRRL Y-1056) (Yeast).